Here is a 278-residue protein sequence, read N- to C-terminus: Ribosomal RNA small subunit methyltransferase J (278 aa).

Residues 143–144 (ER) and aspartate 197 each bind S-adenosyl-L-methionine.

It belongs to the methyltransferase superfamily. RsmJ family.

The protein resides in the cytoplasm. The catalysed reaction is guanosine(1516) in 16S rRNA + S-adenosyl-L-methionine = N(2)-methylguanosine(1516) in 16S rRNA + S-adenosyl-L-homocysteine + H(+). Functionally, specifically methylates the guanosine in position 1516 of 16S rRNA. This is Ribosomal RNA small subunit methyltransferase J from Marinobacter nauticus (strain ATCC 700491 / DSM 11845 / VT8) (Marinobacter aquaeolei).